The sequence spans 545 residues: Threonine--tRNA ligase catalytic subunit (545 aa).

Residues 139 to 433 form a catalytic region; sequence DHRLIGEKLD…LLEHFKGKLP (295 aa). Zn(2+)-binding residues include C231, H282, and H410.

The protein belongs to the class-II aminoacyl-tRNA synthetase family. Homodimer. Probably interacts with its editing subunit. Zn(2+) is required as a cofactor.

It localises to the cytoplasm. It carries out the reaction tRNA(Thr) + L-threonine + ATP = L-threonyl-tRNA(Thr) + AMP + diphosphate + H(+). Its function is as follows. Catalyzes the attachment of threonine to tRNA(Thr) in a two-step reaction: L-threonine is first activated by ATP to form Thr-AMP and then transferred to the acceptor end of tRNA(Thr). Also activates L-serine and transfers it to tRNA(Thr) but cannot deacylate incorrectly charged amino acid; unlike most archaea the editing function is found in a freestanding protein. The protein is Threonine--tRNA ligase catalytic subunit of Saccharolobus islandicus (strain Y.G.57.14 / Yellowstone #1) (Sulfolobus islandicus).